A 143-amino-acid chain; its full sequence is MLRTMLKSKIHRATVTQADLHYVGSVTIDADLMDAADLLEGEQVTIVDIDNGARLVTYAITGERGSGVIGINGAAAHLVHPGDLVILIAYGTMEEAEARAYQPRIVFVDADNKPVDLGHDPAFVPDFEIAGAAELLDPRIVAR.

Residue Ser25 is the Schiff-base intermediate with substrate; via pyruvic acid of the active site. Ser25 carries the pyruvic acid (Ser) modification. Substrate is bound at residue Thr57. The active-site Proton donor is Tyr58. Substrate is bound at residue 73–75; that stretch reads GAA.

Belongs to the PanD family. Heterooctamer of four alpha and four beta subunits. Pyruvate serves as cofactor. In terms of processing, is synthesized initially as an inactive proenzyme, which is activated by self-cleavage at a specific serine bond to produce a beta-subunit with a hydroxyl group at its C-terminus and an alpha-subunit with a pyruvoyl group at its N-terminus.

Its subcellular location is the cytoplasm. It carries out the reaction L-aspartate + H(+) = beta-alanine + CO2. Its pathway is cofactor biosynthesis; (R)-pantothenate biosynthesis; beta-alanine from L-aspartate: step 1/1. Catalyzes the pyruvoyl-dependent decarboxylation of aspartate to produce beta-alanine. This Mycolicibacterium paratuberculosis (strain ATCC BAA-968 / K-10) (Mycobacterium paratuberculosis) protein is Aspartate 1-decarboxylase.